The primary structure comprises 426 residues: Glutamate-1-semialdehyde 2,1-aminomutase 2 (426 aa).

K265 bears the N6-(pyridoxal phosphate)lysine mark.

Belongs to the class-III pyridoxal-phosphate-dependent aminotransferase family. HemL subfamily. In terms of assembly, homodimer. Pyridoxal 5'-phosphate is required as a cofactor.

The protein resides in the cytoplasm. The enzyme catalyses (S)-4-amino-5-oxopentanoate = 5-aminolevulinate. The protein operates within porphyrin-containing compound metabolism; protoporphyrin-IX biosynthesis; 5-aminolevulinate from L-glutamyl-tRNA(Glu): step 2/2. The polypeptide is Glutamate-1-semialdehyde 2,1-aminomutase 2 (Lachnoclostridium phytofermentans (strain ATCC 700394 / DSM 18823 / ISDg) (Clostridium phytofermentans)).